The sequence spans 405 residues: Growth/differentiation factor 11 (405 aa).

An N-terminal signal peptide occupies residues 1-24 (MVLAAPLLLGFLLLALELRPRGEA). Residues 25–296 (AEGPAAAAAA…VLENTKRSRR (272 aa)) constitute a propeptide that is removed on maturation. N-linked (GlcNAc...) asparagine glycosylation occurs at Asn92. 4 disulfide bridges follow: Cys302-Cys312, Cys311-Cys370, Cys339-Cys402, and Cys343-Cys404.

It belongs to the TGF-beta family. Homodimer; disulfide-linked. Interacts directly with ACVR2B. Interacts directly with ACVR2A. Interacts with ACVR1B, TGFBR1 and ACVR1C in an ACVR2B-dependent manner. Interacts with FST isoform 2/FS288. Post-translationally, synthesized as large precursor molecule that undergoes proteolytic cleavage by furin-like proteases. This produces an inactive form consisting of the mature C-terminal portion non-covalently bound to its cleaved N-terminal propeptide. Activation of the mature form requires additional cleavage of the propeptide by a tolloid-like metalloproteinase.

The protein localises to the secreted. Functionally, secreted signal that acts globally to regulate anterior/posterior axial patterning during development. May play critical roles in patterning both mesodermal and neural tissues. It is required for proper vertebral patterning and orofacial development. Signals through activin receptors type-2, ACVR2A and ACVR2B, and activin receptors type-1, ACVR1B, ACVR1C and TGFBR1 leading to the phosphorylation of SMAD2 and SMAD3. In Rattus norvegicus (Rat), this protein is Growth/differentiation factor 11 (Gdf11).